A 515-amino-acid polypeptide reads, in one-letter code: 2,3-bisphosphoglycerate-independent phosphoglycerate mutase (515 aa).

Mn(2+) contacts are provided by D14 and S64. S64 functions as the Phosphoserine intermediate in the catalytic mechanism. Substrate contacts are provided by residues H125, 155-156 (RD), R187, R193, 263-266 (RADR), and K337. Residues D404, H408, D445, H446, and H464 each coordinate Mn(2+).

This sequence belongs to the BPG-independent phosphoglycerate mutase family. Monomer. The cofactor is Mn(2+).

The catalysed reaction is (2R)-2-phosphoglycerate = (2R)-3-phosphoglycerate. Its pathway is carbohydrate degradation; glycolysis; pyruvate from D-glyceraldehyde 3-phosphate: step 3/5. Functionally, catalyzes the interconversion of 2-phosphoglycerate and 3-phosphoglycerate. This chain is 2,3-bisphosphoglycerate-independent phosphoglycerate mutase, found in Yersinia pestis bv. Antiqua (strain Antiqua).